We begin with the raw amino-acid sequence, 190 residues long: Putative resolvase R80 (190 aa).

A DNA-binding region (H-T-H motif) is located at residues 11-30; sequence SSVLGVHQRTLYQWDKKGWI. A Resolvase/invertase-type recombinase catalytic domain is found at 61–190; sequence LSICYVRVSS…RNGSRKYSNK (130 aa). Residues 67–92 adopt a coiled-coil conformation; the sequence is RVSSNSQKDDLERQIKFMKKKYPNHT. The O-(5'-phospho-DNA)-serine intermediate role is filled by S69.

Belongs to the site-specific recombinase resolvase family.

Resolvase catalyzes the resolution (a site-specific recombination) of the cointegrated replicon to yield the final transposition products. The chain is Putative resolvase R80 from Acanthamoeba polyphaga mimivirus (APMV).